We begin with the raw amino-acid sequence, 277 residues long: 4-deoxy-L-threo-5-hexosulose-uronate ketol-isomerase (277 aa).

Positions 195, 197, 202, and 244 each coordinate Zn(2+).

The protein belongs to the KduI family. It depends on Zn(2+) as a cofactor.

It catalyses the reaction 5-dehydro-4-deoxy-D-glucuronate = 3-deoxy-D-glycero-2,5-hexodiulosonate. It participates in glycan metabolism; pectin degradation; 2-dehydro-3-deoxy-D-gluconate from pectin: step 4/5. Catalyzes the isomerization of 5-dehydro-4-deoxy-D-glucuronate to 3-deoxy-D-glycero-2,5-hexodiulosonate. In Oceanobacillus iheyensis (strain DSM 14371 / CIP 107618 / JCM 11309 / KCTC 3954 / HTE831), this protein is 4-deoxy-L-threo-5-hexosulose-uronate ketol-isomerase.